A 626-amino-acid polypeptide reads, in one-letter code: MSKKGRSKGDKPEAETDSVQMANEELRAKLTNIQIEFQQEKSKVGKLRERLQEAKLEREQEQRRHTAYISELKAKLHEEKTKELQALREALIRQHEQEAARTAKIKEGELQRLQATLNVLRDGAADKVKTALLADAREEARRTFDGERQRLQQEILELKAARKQAEEALSNCMQADKAKAADLRAAYQAHQDEVHRIKRECERDIRRLMDEIKGKERVILALEKELGVQTGQTQRLLLQKEALDEQLVQVKEAERHHSSPKRELPPGIGDMAELMGGQDQHMDERDVRRFQLKIAELNSVIRKLEDRNTLLADERNELLKRSRETEVQLKPLVEKNKRMNKKNEELLHSIQRMEEKLKSLTRENVEMKEKLSAQASLKRHTSLNDLSLTRDEQEIEFLRLQVLEQQHVIDDLSLERERLLRSKRHRGKSLKPPKKHVVETFFGFDEESVDSETLSETSYNTDRTDRTPATPEEDLDETTTREEADLRFCQLTREYQALQRAYALLQEQVGGTLDAEREARTREQLQADLLRCQAKIEDLEKLLVEKGQDAAWVEEKQVLMRTNQDLLEKIYRLEMEENQLKSEMQDAKDQNELLEFRVLELEVRDSICCKLSNGADILFEPKLKFM.

Residues 1–25 (MSKKGRSKGDKPEAETDSVQMANEE) form a disordered region. Positions 1–365 (MSKKGRSKGD…KLKSLTRENV (365 aa)) are mediates association with microtubules. Coiled-coil stretches lie at residues 13 to 255 (EAET…EAER) and 284 to 413 (ERDV…DDLS). The mediates interaction with TYK2 and GABBR1 stretch occupies residues 365–626 (VEMKEKLSAQ…ILFEPKLKFM (262 aa)). Position 382 is a phosphoserine (serine 382). Residues 452–461 (ETLSETSYNT) are compositionally biased toward polar residues. The disordered stretch occupies residues 452–481 (ETLSETSYNTDRTDRTPATPEEDLDETTTR). Position 470 is a phosphothreonine (threonine 470). A coiled-coil region spans residues 490–604 (QLTREYQALQ…EFRVLELEVR (115 aa)).

The protein belongs to the JAKMIP family. Homodimer. Interacts with JAK1 and TYK2. Forms a complex with GABBR1 and KIF5B/kinesin-1. Phosphorylated.

The protein resides in the cytoplasm. Its subcellular location is the cytoskeleton. The protein localises to the membrane. Its function is as follows. Associates with microtubules and may play a role in the microtubule-dependent transport of the GABA-B receptor. May play a role in JAK1 signaling and regulate microtubule cytoskeleton rearrangements. This chain is Janus kinase and microtubule-interacting protein 1 (Jakmip1), found in Mus musculus (Mouse).